An 864-amino-acid polypeptide reads, in one-letter code: Mitochondrial 15S rRNA processing factor CCM1 (864 aa).

A mitochondrion-targeting transit peptide spans 1–76 (MYMARCGPKN…REFSNTLKER (76 aa)). PPR repeat units lie at residues 319–353 (NKQNLTTVIQFYSRKEMTKQAWNTFDTMKFLSTKH) and 356–390 (DICTYNTMLRICEKERNFPKALDLFQEIQDHNIKP).

This sequence belongs to the CCM1 family. Binds to mitochondrial small subunit 15S rRNA.

The protein resides in the mitochondrion. Regulates mitochondrial small subunit maturation by controlling 15S rRNA 5'-end processing. Localizes to the 5' precursor of the 15S rRNA in a position that is subsequently occupied by mS47 in the mature yeast mtSSU. Uses structure and sequence-specific RNA recognition, binding to a single-stranded region of the precursor and specifically recognizing bases -6 to -1. The exchange of Ccm1 for mS47 is coupled to the irreversible removal of precursor rRNA that is accompanied by conformational changes of the mitoribosomal proteins uS5m and mS26. These conformational changes signal completion of 5'-end rRNA processing through protection of the mature 5'-end of the 15S rRNA and stabilization of mS47. The removal of the 5' precursor together with the dissociation of Ccm1 may be catalyzed by the 5'-3' exoribonuclease Pet127. Involved in the specific removal of group I introns in mitochondrial encoded transcripts. This chain is Mitochondrial 15S rRNA processing factor CCM1 (CCM1), found in Saccharomyces cerevisiae (strain YJM789) (Baker's yeast).